The sequence spans 193 residues: Annexin-2 receptor (193 aa).

The span at 78–87 (QSTLEPSTAK) shows a compositional bias: polar residues. The disordered stretch occupies residues 78–111 (QSTLEPSTAKPTEFSWPGTQKQQEAPVEEVGQAE).

In terms of tissue distribution, widely expressed. Highly expressed in lymphocytes. Expressed in both resting CD4(+) and CD8(+) T-cells.

In terms of biological role, may act as a receptor for annexin II on marrow stromal cells to induce osteoclast formation. This Homo sapiens (Human) protein is Annexin-2 receptor (ANXA2R).